A 259-amino-acid chain; its full sequence is Thiazole synthase (259 aa).

Lys99 functions as the Schiff-base intermediate with DXP in the catalytic mechanism. Residues Gly161, 187-188 (AG), and 209-210 (NT) contribute to the 1-deoxy-D-xylulose 5-phosphate site.

Belongs to the ThiG family. Homotetramer. Forms heterodimers with either ThiH or ThiS.

The protein localises to the cytoplasm. It catalyses the reaction [ThiS sulfur-carrier protein]-C-terminal-Gly-aminoethanethioate + 2-iminoacetate + 1-deoxy-D-xylulose 5-phosphate = [ThiS sulfur-carrier protein]-C-terminal Gly-Gly + 2-[(2R,5Z)-2-carboxy-4-methylthiazol-5(2H)-ylidene]ethyl phosphate + 2 H2O + H(+). Its pathway is cofactor biosynthesis; thiamine diphosphate biosynthesis. Functionally, catalyzes the rearrangement of 1-deoxy-D-xylulose 5-phosphate (DXP) to produce the thiazole phosphate moiety of thiamine. Sulfur is provided by the thiocarboxylate moiety of the carrier protein ThiS. In vitro, sulfur can be provided by H(2)S. This is Thiazole synthase from Sulfurimonas denitrificans (strain ATCC 33889 / DSM 1251) (Thiomicrospira denitrificans (strain ATCC 33889 / DSM 1251)).